The following is a 181-amino-acid chain: Adenine phosphoribosyltransferase (181 aa).

Belongs to the purine/pyrimidine phosphoribosyltransferase family. As to quaternary structure, homodimer.

The protein resides in the cytoplasm. The enzyme catalyses AMP + diphosphate = 5-phospho-alpha-D-ribose 1-diphosphate + adenine. It functions in the pathway purine metabolism; AMP biosynthesis via salvage pathway; AMP from adenine: step 1/1. Catalyzes a salvage reaction resulting in the formation of AMP, that is energically less costly than de novo synthesis. This Chelativorans sp. (strain BNC1) protein is Adenine phosphoribosyltransferase.